A 996-amino-acid chain; its full sequence is Receptor-like protein kinase HSL1 (996 aa).

The first 15 residues, 1–15 (MYLLFLFLLFPTVFS), serve as a signal peptide directing secretion. Residues 16–618 (LNQDGFILQQ…ENEAKKRGYV (603 aa)) are Extracellular-facing. LRR repeat units follow at residues 59–83 (FSSVTSVDLSSANLAGPFPSVICRL), 84–107 (SNLAHLSLYNNSINSTLPLNIAAC), 109–131 (SLQTLDLSQNLLTGELPQTLADI), 133–154 (TLVHLDLTGNNFSGDIPASFGK), 155–178 (FENLEVLSLVYNLLDGTIPPFLGN), 179–203 (ISTLKMLNLSYNPFSPSRIPPEFGN), 205–228 (TNLEVMWLTECHLVGQIPDSLGQL), 229–252 (SKLVDLDLALNDLVGHIPPSLGGL), 253–276 (TNVVQIELYNNSLTGEIPPELGNL), 278–299 (SLRLLDASMNQLTGKIPDELCR), 300–323 (VPLESLNLYENNLEGELPASIALS), 325–347 (NLYEIRIFGNRLTGGLPKDLGLN), 348–371 (SPLRWLDVSENEFSGDLPADLCAK), 373–395 (ELEELLIIHNSFSGVIPESLADC), 396–419 (RSLTRIRLAYNRFSGSVPTGFWGL), 421–443 (HVNLLELVNNSFSGEISKSIGGA), 444–467 (SNLSLLILSNNEFTGSLPEEIGSL), 468–491 (DNLNQLSASGNKFSGSLPDSLMSL), 493–515 (ELGTLDLHGNQFSGELTSGIKSW), 516–539 (KKLNELNLADNEFTGKIPDEIGSL), 541–562 (VLNYLDLSGNMFSGKIPVSLQS), and 563–586 (LKLNQLNLSYNRLSGDLPPSLAKD). Residues Asn93 and Asn97 are each glycosylated (N-linked (GlcNAc...) asparagine). N-linked (GlcNAc...) asparagine glycosylation is found at Asn143, Asn178, Asn186, and Asn203. A glycan (N-linked (GlcNAc...) asparagine) is linked at Asn262. Asn429 and Asn445 each carry an N-linked (GlcNAc...) asparagine glycan. N-linked (GlcNAc...) asparagine glycosylation is present at Asn569. Residues 619–639 (WLLRSIFVLAAMVLLAGVAWF) form a helical membrane-spanning segment. Residues 640–996 (YFKYRTFKKA…EDTSDQGSIA (357 aa)) are Cytoplasmic-facing. The 287-residue stretch at 676 to 962 (LDEDNVIGAG…RRVVKMLQEI (287 aa)) folds into the Protein kinase domain. Residues 682 to 690 (IGAGASGKV) and Lys704 contribute to the ATP site. Tyr764 and Tyr802 each carry phosphotyrosine. The active-site Proton acceptor is the Asp815. Ser851 is modified (phosphoserine). Tyr859 and Tyr866 each carry phosphotyrosine. Phosphothreonine is present on Thr867. A disordered region spans residues 967 to 996 (EDSLHKIRDDKDGKLTPYYNEDTSDQGSIA). Residues 968 to 980 (DSLHKIRDDKDGK) are compositionally biased toward basic and acidic residues.

Belongs to the protein kinase superfamily. Ser/Thr protein kinase family.

Its subcellular location is the cell membrane. It catalyses the reaction L-seryl-[protein] + ATP = O-phospho-L-seryl-[protein] + ADP + H(+). The catalysed reaction is L-threonyl-[protein] + ATP = O-phospho-L-threonyl-[protein] + ADP + H(+). The sequence is that of Receptor-like protein kinase HSL1 (HSL1) from Arabidopsis thaliana (Mouse-ear cress).